The primary structure comprises 264 residues: Proteasome subunit beta type-4 (264 aa).

An N-acetylmethionine modification is found at Met1. The propeptide occupies 1–45 (MEAFLGSRSGLWAGGPAPGQFYRIPSTPDSFMDPASALYRGPITR). Ser26 carries the phosphoserine modification. Residue Tyr102 is modified to Phosphotyrosine.

Belongs to the peptidase T1B family. As to quaternary structure, the 26S proteasome consists of a 20S proteasome core and two 19S regulatory subunits. The 20S proteasome core is a barrel-shaped complex made of 28 subunits that are arranged in four stacked rings. The two outer rings are each formed by seven alpha subunits, and the two inner rings are formed by seven beta subunits. The proteolytic activity is exerted by three beta-subunits PSMB5, PSMB6 and PSMB7. Forms a ternary complex with SMAD1 and OAZ1 before PSMB4 is incorporated into the 20S proteasome. Interacts with PRPF19. In terms of assembly, (Microbial infection) Interacts with HTLV-1 Tax protein. (Microbial infection) Interacts with HIV-1 Nef and Tat proteins.

The protein localises to the cytoplasm. Its subcellular location is the nucleus. Functionally, non-catalytic component of the 20S core proteasome complex involved in the proteolytic degradation of most intracellular proteins. This complex plays numerous essential roles within the cell by associating with different regulatory particles. Associated with two 19S regulatory particles, forms the 26S proteasome and thus participates in the ATP-dependent degradation of ubiquitinated proteins. The 26S proteasome plays a key role in the maintenance of protein homeostasis by removing misfolded or damaged proteins that could impair cellular functions, and by removing proteins whose functions are no longer required. Associated with the PA200 or PA28, the 20S proteasome mediates ubiquitin-independent protein degradation. This type of proteolysis is required in several pathways including spermatogenesis (20S-PA200 complex) or generation of a subset of MHC class I-presented antigenic peptides (20S-PA28 complex). SMAD1/OAZ1/PSMB4 complex mediates the degradation of the CREBBP/EP300 repressor SNIP1. The chain is Proteasome subunit beta type-4 from Homo sapiens (Human).